The primary structure comprises 947 residues: DNA polymerase (947 aa).

Belongs to the DNA polymerase type-B family.

The catalysed reaction is DNA(n) + a 2'-deoxyribonucleoside 5'-triphosphate = DNA(n+1) + diphosphate. This chain is DNA polymerase, found in Red sea bream iridovirus (RSIV).